The following is a 216-amino-acid chain: MOB kinase activator 3B (216 aa).

4 residues coordinate Zn(2+): Cys82, Cys87, His164, and His169.

It belongs to the MOB1/phocein family.

In terms of biological role, modulates LATS1 expression in the Hippo signaling pathway which plays a pivotal role in organ size control and tumor suppression by restricting proliferation and promoting apoptosis. This is MOB kinase activator 3B from Homo sapiens (Human).